A 37-amino-acid chain; its full sequence is Protease 2 large chain (37 aa).

Residues 1-14 are compositionally biased toward basic and acidic residues; the sequence is NDGNGRDSDPHDPG. The disordered stretch occupies residues 1–37; sequence NDGNGRDSDPHDPGDWTTAGQCGLWQPARNSQHWTLV. The span at 28 to 37 shows a compositional bias: polar residues; the sequence is ARNSQHWTLV.

It belongs to the peptidase S8 family. Heterodimer of a large and a small chain.

It localises to the secreted. This is Protease 2 large chain from Achromobacter lyticus.